Here is a 660-residue protein sequence, read N- to C-terminus: Bifunctional polymyxin resistance protein ArnA (660 aa).

A formyltransferase ArnAFT region spans residues 1 to 304 (MKAVIFAYHD…TLGLVAGARL (304 aa)). The active-site Proton donor; for formyltransferase activity is the His104. (6R)-10-formyltetrahydrofolate contacts are provided by residues Arg114 and 136–140 (VKRAD). The dehydrogenase ArnADH stretch occupies residues 314 to 660 (RRIRVLILGV…RSVDVAERAS (347 aa)). NAD(+)-binding positions include Asp347 and 368–369 (DI). UDP-alpha-D-glucuronate is bound by residues Ala393, Tyr398, and 432–433 (TS). The active-site Proton acceptor; for decarboxylase activity is the Glu434. UDP-alpha-D-glucuronate is bound by residues Arg460, Asn492, 526–535 (KLIDGGQQKR), and Tyr613. The Proton donor; for decarboxylase activity role is filled by Arg619.

The protein in the N-terminal section; belongs to the Fmt family. UDP-L-Ara4N formyltransferase subfamily. In the C-terminal section; belongs to the NAD(P)-dependent epimerase/dehydratase family. UDP-glucuronic acid decarboxylase subfamily. As to quaternary structure, homohexamer, formed by a dimer of trimers.

The enzyme catalyses UDP-alpha-D-glucuronate + NAD(+) = UDP-beta-L-threo-pentopyranos-4-ulose + CO2 + NADH. It catalyses the reaction UDP-4-amino-4-deoxy-beta-L-arabinose + (6R)-10-formyltetrahydrofolate = UDP-4-deoxy-4-formamido-beta-L-arabinose + (6S)-5,6,7,8-tetrahydrofolate + H(+). It functions in the pathway nucleotide-sugar biosynthesis; UDP-4-deoxy-4-formamido-beta-L-arabinose biosynthesis; UDP-4-deoxy-4-formamido-beta-L-arabinose from UDP-alpha-D-glucuronate: step 1/3. It participates in nucleotide-sugar biosynthesis; UDP-4-deoxy-4-formamido-beta-L-arabinose biosynthesis; UDP-4-deoxy-4-formamido-beta-L-arabinose from UDP-alpha-D-glucuronate: step 3/3. Its pathway is bacterial outer membrane biogenesis; lipopolysaccharide biosynthesis. Functionally, bifunctional enzyme that catalyzes the oxidative decarboxylation of UDP-glucuronic acid (UDP-GlcUA) to UDP-4-keto-arabinose (UDP-Ara4O) and the addition of a formyl group to UDP-4-amino-4-deoxy-L-arabinose (UDP-L-Ara4N) to form UDP-L-4-formamido-arabinose (UDP-L-Ara4FN). The modified arabinose is attached to lipid A and is required for resistance to polymyxin and cationic antimicrobial peptides. This is Bifunctional polymyxin resistance protein ArnA from Salmonella heidelberg (strain SL476).